The primary structure comprises 320 residues: Aristolochene synthase (320 aa).

Polar residues predominate over residues 1 to 14 (MKKPNGTNGASSSL). Residues 1–20 (MKKPNGTNGASSSLEPPPST) are disordered. Mg(2+) contacts are provided by D90, N219, S223, and E227. The (2E,6E)-farnesyl diphosphate site is built by R314 and Y315.

This sequence belongs to the terpene synthase family. In terms of assembly, homodimer. The cofactor is Mg(2+).

It carries out the reaction (2E,6E)-farnesyl diphosphate = (+)-aristolochene + diphosphate. The protein operates within sesquiterpene biosynthesis; aristolochene biosynthesis; aristolochene from farnesyl diphosphate: step 1/1. Catalyzes the cyclization of trans,trans-farnesyl diphosphate (FPP) to the bicyclic sesquiterpene aristolochene. Produces germacrene A as an enzyme-bound intermediate that is not released by the enzyme, but is further cyclized to produce aristolochene. Aristolochene is the likely parent compound for a number of sesquiterpenoid toxins produced by filamentous fungi. The protein is Aristolochene synthase (Ari1) of Aspergillus terreus.